Here is a 380-residue protein sequence, read N- to C-terminus: Glucose-1-phosphate adenylyltransferase (380 aa).

Alpha-D-glucose 1-phosphate contacts are provided by residues Tyr-100, Gly-165, 180–181, and Ser-191; that span reads EK.

It belongs to the bacterial/plant glucose-1-phosphate adenylyltransferase family. Homotetramer.

It catalyses the reaction alpha-D-glucose 1-phosphate + ATP + H(+) = ADP-alpha-D-glucose + diphosphate. The protein operates within glycan biosynthesis; glycogen biosynthesis. In terms of biological role, involved in the biosynthesis of ADP-glucose, a building block required for the elongation reactions to produce glycogen. Catalyzes the reaction between ATP and alpha-D-glucose 1-phosphate (G1P) to produce pyrophosphate and ADP-Glc. This Clostridium acetobutylicum (strain ATCC 824 / DSM 792 / JCM 1419 / IAM 19013 / LMG 5710 / NBRC 13948 / NRRL B-527 / VKM B-1787 / 2291 / W) protein is Glucose-1-phosphate adenylyltransferase.